The sequence spans 1468 residues: MDVLEMLRASASGSYNTIFSDAWCQYVSKQITATVYMYCALVMMSLLFIAWFLYFKRMARLRLRDELARSISTATNSSGDLRGLRFRKRDKMLFYGRRMLRKVKNVSGQMYSSGKGYKRRAVMRFARRILQLRRDNMPLEMRTVEPPAEYLEETIEGSDRVPPDALYMLQSIRIFGHFEKPVFLRLCKHTQLLELMAGDYLFKITDPDDSVYIVQSGMINVYISNADGSTLSLKTVRKGESVTSLLSFIDVLSGNPSYYKTVTAKAIEKSVVIRLPMQAFEEVFQDNPDVMIRVIQVIMIRLQRVLFTALRNYLGLNAELVQNHMRYKSVSTMSGPINSQTSQSSRQAPNGPPMVINQLNLMQSAASGTGSGVSVTVTRPPSSPSRHSREEHTLSDPNPNPDGSFHGTTNLFTEVHGDAPNADLFQQQQQPSVGNLSTRRSSITLMTPDGSHSCVQTPGVTTSIDMRLVQSSAVDSLRKELGLSEEDSHIIEPFVELRELEPNVTLITEGNADDVCVWFVMTGTLAVYQSNQDATRAKQDKSDMLIHFVHPGEIVGGLAMLTGEASAYTIRSRSYARIAFIRRAAIYQIMRQRPRIVLDLGNGVVRRLSPLVRQCDYALDWIFLESGRAVYRQDESSDSTYIVLSGRMRSVITHPGGKKEIVGEYGKGDLVGIVEMITETSRTTTVMAVRDSELAKLPEGLFNAIKLRYPIVVTKLISFLSHRFLGSMQTRSGSGAPGAPVEANPVTHKYSTVALVPITDEVPLTPFTYELYHSLCAIGPVLRLTSDVVRKQLGSNIFEAANEYRLTSWLAQQEDRNIITLYQCDSSLSAWTQRCMRQADVILIVGLGDRSHLVGKFEREIDRLAMRTQKELVLLYPEATNAKPANTLSWLNARPWVTKHHHVLCVKRIFTRKSQYRINDLYSRVLLSEPNMHSDFSRLARWLTGNSIGLVLGGGGARGAAHIGMLKAIQEAGIPVDMVGGVSIGALMGALWCSDRNITTVTQKAREWSKKMTKWFLQLLDLTYPITSMFSGREFNKTIHDTFGDVSIEDLWIPYFTLTTDITASCHRIHTNGSLWRYVRSSMSLSGYMPPLCDPKDGHLLLDGGYVNNLPGHLWRYCRASMSIAGVFPPFCDYRDGHLLLDGCYTNNVPADVMHNLGAAHIIAIDVGSQDDTDLTNYGDDLSGWWLLYKKWNPFTSPVKVPDLPDIQSRLAYVSCVRQLEEVKNSDYCEYIRPPIDKYKTLAFGSFDEIRDVGYVFGKNYFENMAKAGRLGRFNQWFNKEPPKRVNHASLNEYTFIDLAQIVCRLPETYAVNTAELFSEDEDCDGYISEPTTLNTDRRRIQVSRAGNSLSFSETEMDSDVELDLKLERKMDKSTQSSPPTSSRTDMRGKEEAKHMANWHWGVKHKDETGSGATVATHTQTGQEQELQQQQKLQQLQQDQGARAEQLVDKDKEEDKENRSSPNNETKN.

At 1–34 (MDVLEMLRASASGSYNTIFSDAWCQYVSKQITAT) the chain is on the lumenal side. The helical transmembrane segment at 35–55 (VYMYCALVMMSLLFIAWFLYF) threads the bilayer. The Cytoplasmic segment spans residues 56 to 1468 (KRMARLRLRD…RSSPNNETKN (1413 aa)). 174-301 (IFGHFEKPVF…IRVIQVIMIR (128 aa)) serves as a coordination point for a nucleoside 3',5'-cyclic phosphate. 2 stretches are compositionally biased toward polar residues: residues 332-348 (TMSG…SRQA) and 357-366 (NQLNLMQSAA). A disordered region spans residues 332–411 (TMSGPINSQT…DGSFHGTTNL (80 aa)). Phosphoserine occurs at positions 442 and 451. A nucleoside 3',5'-cyclic phosphate-binding positions include 480–607 (ELGL…VVRR) and 596–723 (IVLD…LSHR). Residues 950–1116 (LVLGGGGARG…VNNLPGHLWR (167 aa)) enclose the PNPLA domain. Positions 954 to 959 (GGGARG) match the GXGXXG motif. Positions 981–985 (GVSIG) match the GXSXG motif. The active-site Nucleophile is serine 983. Aspartate 1103 serves as the catalytic Proton acceptor. The DGA/G signature appears at 1103-1105 (DGG). Serine 1197 carries the post-translational modification Phosphoserine. The segment at 1368 to 1468 (ERKMDKSTQS…RSSPNNETKN (101 aa)) is disordered. Residues 1374–1383 (STQSSPPTSS) show a composition bias toward low complexity. A compositionally biased stretch (basic and acidic residues) spans 1385–1395 (TDMRGKEEAKH). The segment covering 1419–1441 (TQTGQEQELQQQQKLQQLQQDQG) has biased composition (low complexity). Residues 1446 to 1459 (QLVDKDKEEDKENR) are compositionally biased toward basic and acidic residues.

It belongs to the NTE family. As to quaternary structure, interacts with Pka-C3; interaction inhibits the catalytic function of Pka-C3 and the esterase activity of sws.

It localises to the endoplasmic reticulum membrane. It catalyses the reaction a 1-acyl-sn-glycero-3-phosphocholine + H2O = sn-glycerol 3-phosphocholine + a fatty acid + H(+). In terms of biological role, phospholipase B that deacylates intracellular phosphatidylcholine (PtdCho), generating glycerophosphocholine (GroPtdCho). This deacylation occurs at both sn-2 and sn-1 positions of PtdCho. Its specific chemical modification by certain organophosphorus (OP) compounds leads to distal axonopathy. Plays a role in the signaling mechanism between neurons and glia that regulates glia wrapping during development of the adult brain. Essential for membrane lipid homeostasis and cell survival in both neurons and glia of the adult brain. The chain is Neuropathy target esterase sws from Drosophila sechellia (Fruit fly).